The sequence spans 463 residues: Argininosuccinate lyase (463 aa).

2-(N(omega)-L-arginino)succinate is bound by residues S27, N115, and T161. Catalysis depends on H162, which acts as the Proton acceptor. S283 acts as the Proton donor in catalysis. 2-(N(omega)-L-arginino)succinate-binding residues include N291, Y323, Q328, and K331.

This sequence belongs to the lyase 1 family. Argininosuccinate lyase subfamily. In terms of assembly, homotetramer.

The enzyme catalyses 2-(N(omega)-L-arginino)succinate = fumarate + L-arginine. The protein operates within amino-acid biosynthesis; L-arginine biosynthesis; L-arginine from L-ornithine and carbamoyl phosphate: step 3/3. The polypeptide is Argininosuccinate lyase (ARG4) (Saccharomyces paradoxus (Yeast)).